The primary structure comprises 296 residues: ATP phosphoribosyltransferase (296 aa).

Belongs to the ATP phosphoribosyltransferase family.

The protein resides in the cytoplasm. The enzyme catalyses 1-(5-phospho-beta-D-ribosyl)-ATP + diphosphate = 5-phospho-alpha-D-ribose 1-diphosphate + ATP. It participates in amino-acid biosynthesis; L-histidine biosynthesis; L-histidine from 5-phospho-alpha-D-ribose 1-diphosphate: step 1/9. Functionally, catalyzes the condensation of ATP and 5-phosphoribose 1-diphosphate to form N'-(5'-phosphoribosyl)-ATP (PR-ATP). Has a crucial role in the pathway because the rate of histidine biosynthesis seems to be controlled primarily by regulation of the enzymatic activity. The polypeptide is ATP phosphoribosyltransferase (HIS1) (Yarrowia lipolytica (strain CLIB 122 / E 150) (Yeast)).